A 171-amino-acid chain; its full sequence is Small ribosomal subunit protein uS5 (171 aa).

Residues 15–78 (LEEKVVKINR…EKAKKQLVRI (64 aa)) form the S5 DRBM domain.

Belongs to the universal ribosomal protein uS5 family. Part of the 30S ribosomal subunit. Contacts proteins S4 and S8.

Its function is as follows. With S4 and S12 plays an important role in translational accuracy. Functionally, located at the back of the 30S subunit body where it stabilizes the conformation of the head with respect to the body. The protein is Small ribosomal subunit protein uS5 of Onion yellows phytoplasma (strain OY-M).